The chain runs to 257 residues: Snake venom serine protease nikobin (257 aa).

The signal sequence occupies residues 1–18 (MVLIRVLANLLLLQLSYA). Positions 19-24 (QKSSEL) are excised as a propeptide. The 224-residue stretch at 25-248 (VIGGDECNIN…YSDWIQSIIA (224 aa)) folds into the Peptidase S1 domain. Cystine bridges form between Cys-31–Cys-162, Cys-49–Cys-65, Cys-97–Cys-255, Cys-141–Cys-209, Cys-173–Cys-188, and Cys-199–Cys-224. Residues His-64 and Asp-109 each act as charge relay system in the active site. N-linked (GlcNAc...) asparagine glycosylation is found at Asn-120 and Asn-121. Ser-203 serves as the catalytic Charge relay system. Residue Asn-250 is glycosylated (N-linked (GlcNAc...) asparagine).

It belongs to the peptidase S1 family. Snake venom subfamily. Monomer. Expressed by the venom gland.

It localises to the secreted. Functionally, snake venom serine protease that may act in the hemostasis system of the prey. This chain is Snake venom serine protease nikobin (sp-VN), found in Vipera nikolskii (Nikolsky's adder).